The primary structure comprises 247 residues: Ubiquinone biosynthesis O-methyltransferase (247 aa).

The S-adenosyl-L-methionine site is built by R40, G71, D92, and M135.

The protein belongs to the methyltransferase superfamily. UbiG/COQ3 family.

It carries out the reaction a 3-demethylubiquinol + S-adenosyl-L-methionine = a ubiquinol + S-adenosyl-L-homocysteine + H(+). It catalyses the reaction a 3-(all-trans-polyprenyl)benzene-1,2-diol + S-adenosyl-L-methionine = a 2-methoxy-6-(all-trans-polyprenyl)phenol + S-adenosyl-L-homocysteine + H(+). It functions in the pathway cofactor biosynthesis; ubiquinone biosynthesis. O-methyltransferase that catalyzes the 2 O-methylation steps in the ubiquinone biosynthetic pathway. The sequence is that of Ubiquinone biosynthesis O-methyltransferase from Ruegeria sp. (strain TM1040) (Silicibacter sp.).